A 167-amino-acid chain; its full sequence is NAD(P)H-quinone oxidoreductase subunit I, chloroplastic (167 aa).

2 consecutive 4Fe-4S ferredoxin-type domains span residues 55–84 (GRIH…VDWK) and 95–124 (LNYS…MTEE). C64, C67, C70, C74, C104, C107, C110, and C114 together coordinate [4Fe-4S] cluster.

It belongs to the complex I 23 kDa subunit family. As to quaternary structure, NDH is composed of at least 16 different subunits, 5 of which are encoded in the nucleus. The cofactor is [4Fe-4S] cluster.

Its subcellular location is the plastid. It localises to the chloroplast thylakoid membrane. The catalysed reaction is a plastoquinone + NADH + (n+1) H(+)(in) = a plastoquinol + NAD(+) + n H(+)(out). It carries out the reaction a plastoquinone + NADPH + (n+1) H(+)(in) = a plastoquinol + NADP(+) + n H(+)(out). Functionally, NDH shuttles electrons from NAD(P)H:plastoquinone, via FMN and iron-sulfur (Fe-S) centers, to quinones in the photosynthetic chain and possibly in a chloroplast respiratory chain. The immediate electron acceptor for the enzyme in this species is believed to be plastoquinone. Couples the redox reaction to proton translocation, and thus conserves the redox energy in a proton gradient. The sequence is that of NAD(P)H-quinone oxidoreductase subunit I, chloroplastic from Lobularia maritima (Sweet alyssum).